The primary structure comprises 1070 residues: DNA-directed RNA polymerase subunit beta (1070 aa).

It belongs to the RNA polymerase beta chain family. In plastids the minimal PEP RNA polymerase catalytic core is composed of four subunits: alpha, beta, beta', and beta''. When a (nuclear-encoded) sigma factor is associated with the core the holoenzyme is formed, which can initiate transcription.

It is found in the plastid. Its subcellular location is the chloroplast. The catalysed reaction is RNA(n) + a ribonucleoside 5'-triphosphate = RNA(n+1) + diphosphate. In terms of biological role, DNA-dependent RNA polymerase catalyzes the transcription of DNA into RNA using the four ribonucleoside triphosphates as substrates. This chain is DNA-directed RNA polymerase subunit beta, found in Phalaenopsis aphrodite subsp. formosana (Moth orchid).